A 486-amino-acid polypeptide reads, in one-letter code: Transcription factor aptf-4 (486 aa).

2 disordered regions span residues Cys-25–Met-49 and Leu-150–Lys-173. Residues Leu-150 to Cys-169 show a composition bias toward polar residues. The H-S-H (helix-span-helix), dimerization stretch occupies residues Gln-301–Glu-430.

This sequence belongs to the AP-2 family. Binds DNA as a dimer.

It is found in the nucleus. Functionally, sequence-specific DNA-binding protein that interacts with enhancer elements to regulate transcription of selected genes. Required for neuroblast and epidermal morphogenesis, perhaps acting in cooperation with transcription factor aptf-2. This chain is Transcription factor aptf-4, found in Caenorhabditis elegans.